A 237-amino-acid chain; its full sequence is Eukaryotic translation initiation factor 4E-1 (237 aa).

Residues 1–61 (MVVEDTQKSV…KPPAALARNP (61 aa)) form a disordered region. The span at 25 to 44 (NNDDDDDDLEEGEIPVDGED) shows a compositional bias: acidic residues. The segment covering 47–58 (ATATTKPPAALA) has biased composition (low complexity). 2 EIF4G-binding regions span residues 62-65 (HPLE) and 72-108 (FDNP…NNIH). Residues 80–85 (KQAAWG), K112, and 130–131 (WE) contribute to the mRNA site. Cysteines 135 and 173 form a disulfide. The interval 156–165 (YTLLAMIGEQ) is EIF4G-binding. Residues 180–185 (RSRQDK) and 225–229 (KKLDR) each bind mRNA.

It belongs to the eukaryotic initiation factor 4E family. As to quaternary structure, EIF4F is a multi-subunit complex, the composition of which varies with external and internal environmental conditions. It is composed of at least EIF4A, EIF4E and EIF4G. EIF4E is also known to interact with other partners. In higher plants two isoforms of EIF4F have been identified, named isoform EIF4F and isoform EIF(iso)4F. Isoform EIF4F has subunits p220 and p26, whereas isoform EIF(iso)4F has subunits p82 and p28. In terms of assembly, (Microbial infection) Interacts with potyvirus viral genome-linked protein (VPg) in the nucleus; this interaction is possible in susceptible hosts but is impaired in resistant plants. Binds to soybean mosaic virus (SMV) VPg in the nucleus. Interacts with SMV nuclear inclusion protein A (NIa-Pro) and nuclear inclusion protein B (NIb) in the cytoplasm. According to the redox status, the Cys-135-Cys-173 disulfide bridge may have a role in regulating protein function by affecting its ability to bind capped mRNA. As to expression, mostly expressed in roots, flowers, immature pods and mature seeds, and, to a lower extent, in stems and leaves.

It is found in the nucleus. The protein resides in the cytoplasm. Component of the protein complex eIF4F, which is involved in the recognition of the mRNA cap, ATP-dependent unwinding of 5'-terminal secondary structure and recruitment of mRNA to the ribosome. Recognizes and binds the 7-methylguanosine-containing mRNA cap during an early step in the initiation of protein synthesis and facilitates ribosome binding by inducing the unwinding of the mRNAs secondary structures. Key component of recessive resistance to potyviruses (e.g. soybean mosaic virus (SMV), bean common mosaic virus (BCMV) and watermelon mosaic virus (WMV), but not bean pod mottle virus (BPMV)). Functionally, (Microbial infection) Susceptibility host factor required for viral infection by recruiting viral RNAs to the host ribosomal complex via an interaction with viral genome-linked protein (VPg). The chain is Eukaryotic translation initiation factor 4E-1 from Glycine max (Soybean).